Consider the following 574-residue polypeptide: Proline--tRNA ligase (574 aa).

Belongs to the class-II aminoacyl-tRNA synthetase family. ProS type 1 subfamily. As to quaternary structure, homodimer.

The protein localises to the cytoplasm. It carries out the reaction tRNA(Pro) + L-proline + ATP = L-prolyl-tRNA(Pro) + AMP + diphosphate. Its function is as follows. Catalyzes the attachment of proline to tRNA(Pro) in a two-step reaction: proline is first activated by ATP to form Pro-AMP and then transferred to the acceptor end of tRNA(Pro). As ProRS can inadvertently accommodate and process non-cognate amino acids such as alanine and cysteine, to avoid such errors it has two additional distinct editing activities against alanine. One activity is designated as 'pretransfer' editing and involves the tRNA(Pro)-independent hydrolysis of activated Ala-AMP. The other activity is designated 'posttransfer' editing and involves deacylation of mischarged Ala-tRNA(Pro). The misacylated Cys-tRNA(Pro) is not edited by ProRS. The chain is Proline--tRNA ligase from Ralstonia pickettii (strain 12J).